The following is a 455-amino-acid chain: tRNA-2-methylthio-N(6)-dimethylallyladenosine synthase (455 aa).

The 116-residue stretch at Lys18–Ala133 folds into the MTTase N-terminal domain. Cys27, Cys63, Cys97, Cys171, Cys175, and Cys178 together coordinate [4Fe-4S] cluster. The Radical SAM core domain occupies Cys157–Glu390. Residues Gln393–Val455 enclose the TRAM domain.

It belongs to the methylthiotransferase family. MiaB subfamily. Monomer. Requires [4Fe-4S] cluster as cofactor.

It is found in the cytoplasm. It carries out the reaction N(6)-dimethylallyladenosine(37) in tRNA + (sulfur carrier)-SH + AH2 + 2 S-adenosyl-L-methionine = 2-methylsulfanyl-N(6)-dimethylallyladenosine(37) in tRNA + (sulfur carrier)-H + 5'-deoxyadenosine + L-methionine + A + S-adenosyl-L-homocysteine + 2 H(+). Functionally, catalyzes the methylthiolation of N6-(dimethylallyl)adenosine (i(6)A), leading to the formation of 2-methylthio-N6-(dimethylallyl)adenosine (ms(2)i(6)A) at position 37 in tRNAs that read codons beginning with uridine. This Bacteroides thetaiotaomicron (strain ATCC 29148 / DSM 2079 / JCM 5827 / CCUG 10774 / NCTC 10582 / VPI-5482 / E50) protein is tRNA-2-methylthio-N(6)-dimethylallyladenosine synthase.